The primary structure comprises 346 residues: T-box protein 12 (346 aa).

The segment covering 33 to 48 (DEEDVEVDVEDVDDVD) has biased composition (acidic residues). The tract at residues 33–66 (DEEDVEVDVEDVDDVDLSSIPSKSPERSRGRPKI) is disordered. The T-box DNA-binding region spans 86–268 (LWAKFFDLGT…KNPFAKGFRD (183 aa)).

It is found in the nucleus. Its function is as follows. Transcription factor. Involved in cell fate determination; required to pattern the posterior hindgut. Involved in motor neuron fate determination and maintenance, acting as a transcriptional repressor to counteract gene activation by transcription factor unc-3 in a subset of motor neurons. Required throughout development to repress transcription by unc-3, probably acting by binding to specific promoter elements. Represses expression of VA and VB motor neuron-specific effector genes, such as DEG/ENaC channel del-1 and the innexin inx-12, in DA and DB motor neurons. Represses expression of transcription factor bnc-1, perhaps acting directly, in DA and DB motor neurons. The protein is T-box protein 12 (mab-9) of Caenorhabditis elegans.